A 202-amino-acid polypeptide reads, in one-letter code: Hydrogenase expression/formation protein HupD (202 aa).

3 residues coordinate Ni(2+): glutamate 28, aspartate 74, and histidine 105.

It belongs to the peptidase A31 family.

Its function is as follows. Not known. Could be involved in the processing of hydrogenase. The chain is Hydrogenase expression/formation protein HupD (hupD) from Rhizobium leguminosarum bv. viciae.